The sequence spans 485 residues: MDIGQTHLGGLISNSQQDEKVRYHIVGSRVRMACNLVKSLYGGSHRSKLIVNGYGQILLSSQPGVIYDNVKVNHPLVKLLQEYVKKMDVIGDGATFFVVLVSELIQEAIDVIGRGMKPACFSSLLREAHKEIDDLGRELLVEHRIDFEDKESISMVLRGVLKDKWLEEIVVEGISLARSFSSESIRVCKVACGSVEDSYVVEGMVFNRLPEGEVKHARQGRTSIYNCPLDISRTELKGTVLMRTASELLSFSKEENKRIKELVESIGADVIICSGKVDKIYLDFLNKGRKLVFRITSKYDLRRIRELLGGHILSTLEPPAEGSMGVVSEVATFREGSTEYTKFISGSKKVYTLVLKNSVQAVLDEHERMVQKALVVLSKNVSGGKIGLVDGAGRFERRLSKAFLERSAGLSGGKSLAYKCIGKALGTFGSSDVEVYDIYNAKIKALKYSMEFVSTLFETSDYLIGRPEALNIGPRNNQHWDEEDH.

The protein belongs to the TCP-1 chaperonin family. In terms of assembly, component of the T-complex protein 1 (TCP1) complex.

The protein localises to the cytoplasm. In terms of biological role, molecular chaperone; assists the folding of proteins upon ATP hydrolysis. The sequence is that of T-complex protein 1 subunit theta (CCT8) from Encephalitozoon cuniculi (strain GB-M1) (Microsporidian parasite).